A 470-amino-acid polypeptide reads, in one-letter code: Neuraminidase (470 aa).

At 1–6 (MNPNQK) the chain is on the intravirion side. The helical transmembrane segment at 7–27 (IITIGSISIAIGIISLMLQIG) threads the bilayer. Residues 11 to 33 (GSISIAIGIISLMLQIGNIISIW) are involved in apical transport and lipid raft association. Over 28–470 (NIISIWASHS…GAELPFTIDK (443 aa)) the chain is Virion surface. Positions 36–90 (HSIQTGSQNHTGICNQRIITYENSTWVNHTYVNINNTNVVAGKDKTSVTLAGNSS) are hypervariable stalk region. N-linked (GlcNAc...) asparagine; by host glycosylation is found at Asn-44, Asn-58, Asn-63, Asn-70, and Asn-88. The interval 91-470 (LCSISGWAIY…GAELPFTIDK (380 aa)) is head of neuraminidase. 8 disulfide bridges follow: Cys-92–Cys-417, Cys-124–Cys-129, Cys-184–Cys-231, Cys-233–Cys-238, Cys-279–Cys-292, Cys-281–Cys-290, Cys-318–Cys-335, and Cys-421–Cys-447. Arg-118 is a binding site for substrate. An N-linked (GlcNAc...) asparagine; by host glycan is attached at Asn-146. The active-site Proton donor/acceptor is Asp-151. Arg-152 provides a ligand contact to substrate. N-linked (GlcNAc...) asparagine; by host glycosylation occurs at Asn-235. 277–278 (EE) lines the substrate pocket. Arg-293 contributes to the substrate binding site. Residues Asp-294, Gly-298, and Asp-324 each coordinate Ca(2+). Arg-368 is a binding site for substrate. The active-site Nucleophile is the Tyr-402. Residues Asn-434 and Asn-455 are each glycosylated (N-linked (GlcNAc...) asparagine; by host).

This sequence belongs to the glycosyl hydrolase 34 family. Homotetramer. Requires Ca(2+) as cofactor. N-glycosylated.

Its subcellular location is the virion membrane. It is found in the host apical cell membrane. The enzyme catalyses Hydrolysis of alpha-(2-&gt;3)-, alpha-(2-&gt;6)-, alpha-(2-&gt;8)- glycosidic linkages of terminal sialic acid residues in oligosaccharides, glycoproteins, glycolipids, colominic acid and synthetic substrates.. Its activity is regulated as follows. Inhibited by the neuraminidase inhibitors zanamivir (Relenza) and oseltamivir (Tamiflu). These drugs interfere with the release of progeny virus from infected cells and are effective against all influenza strains. Resistance to neuraminidase inhibitors is quite rare. Its function is as follows. Catalyzes the removal of terminal sialic acid residues from viral and cellular glycoconjugates. Cleaves off the terminal sialic acids on the glycosylated HA during virus budding to facilitate virus release. Additionally helps virus spread through the circulation by further removing sialic acids from the cell surface. These cleavages prevent self-aggregation and ensure the efficient spread of the progeny virus from cell to cell. Otherwise, infection would be limited to one round of replication. Described as a receptor-destroying enzyme because it cleaves a terminal sialic acid from the cellular receptors. May facilitate viral invasion of the upper airways by cleaving the sialic acid moieties on the mucin of the airway epithelial cells. Likely to plays a role in the budding process through its association with lipid rafts during intracellular transport. May additionally display a raft-association independent effect on budding. Plays a role in the determination of host range restriction on replication and virulence. Sialidase activity in late endosome/lysosome traffic seems to enhance virus replication. The chain is Neuraminidase from Aves (Human).